An 855-amino-acid chain; its full sequence is MRAREIERNCPNLWKWGIMLLGILMICSAADNLWVTVYYGVPVWKEATTTLFCASDAKSYKTEAHNIWATHACVPTDPNPQEIELENVTENFNMWRNNMVEQIHEDIISLWDQSLKPCVKLTPLCVTLNCTDESDEWMGNVTGKNVTEDIRMKNCSFNITTVVRDKTKQVHALFYRLDIVPIDNDNSTNSTNYRLINCNTSAITQACPKVSFEPIPIHYCAPAGFAILKCRDKRFNGTGPCTNVSTVQCTHGIRPVVSTQLLLNGSLAEEEIIIRSENLTNNAKIIIVQLNESVAINCTRPYKNTRQSTPIGLGQALYTTRGRTKIIGQAHCNISKEDWNKTLQRVAIKLGNLLNKTTIIFKPSSGGDAEITTHSFNCGGEFFYCNTSGLFNSTWNINNSEGANSTESDNKLITLQCRIKQIINMWQGVGKAMYAPPIEGQINCSSNITGLLLTRDGGTNNSSNETFRPGGGDMRDNWRSELYKYKVVKIEPLGVAPTKAKRRVVEREKRAIGLGAMFLGFLGAAGSTMGAASVTLTVQARQLMSGIVQQQNNLLRAIEAQQHLLQLTVWGIKQLQARILAVERYLKDQQLLGIWGCSGKLICTTTVPWNSSWSNRSLNDIWQNMTWMEWEREIDNYTGLIYRLIEESQTQQEKNEQELLELDKWASLWNWFNITQWLWYIKIFIMIVGGLIGLRIVFAVLSLVNRVRQGYSPLSFQTLLPAPREPDRPEGIEEEGGERGRDRSIRLVNGFSALIWDDLRNLCLFSYHRLRDLILIAARIVELLGRRGWEALKYLWNLLQYWSRELRNSASSLLDTIAIAVAEGTDRVIEIVRRTYRAVLNVPTRIRQGLERLLL.

The signal sequence occupies residues 1 to 31; it reads MRAREIERNCPNLWKWGIMLLGILMICSAAD. Over 32-683 the chain is Extracellular; it reads NLWVTVYYGV…ITQWLWYIKI (652 aa). Cysteine 53 and cysteine 73 are disulfide-bonded. N-linked (GlcNAc...) asparagine; by host glycans are attached at residues asparagine 87, asparagine 129, asparagine 140, asparagine 145, asparagine 154, asparagine 158, asparagine 186, asparagine 189, asparagine 199, asparagine 236, asparagine 243, asparagine 264, asparagine 278, asparagine 291, and asparagine 297. 5 disulfide bridges follow: cysteine 118–cysteine 207, cysteine 125–cysteine 198, cysteine 130–cysteine 155, cysteine 220–cysteine 249, and cysteine 230–cysteine 241. Residues 130-154 form a V1 region; sequence CTDESDEWMGNVTGKNVTEDIRMKN. Residues 155-198 form a V2 region; it reads CSFNITTVVRDKTKQVHALFYRLDIVPIDNDNSTNSTNYRLINC. Positions 298–331 are V3; the sequence is CTRPYKNTRQSTPIGLGQALYTTRGRTKIIGQAH. Cysteine 298 and cysteine 332 form a disulfide bridge. Asparagine 333, asparagine 340, and asparagine 355 each carry an N-linked (GlcNAc...) asparagine; by host glycan. The segment at 364 to 374 is CD4-binding loop; that stretch reads SSGGDAEITTH. 2 cysteine pairs are disulfide-bonded: cysteine 378–cysteine 444 and cysteine 385–cysteine 417. Positions 385-417 are V4; it reads CNTSGLFNSTWNINNSEGANSTESDNKLITLQC. N-linked (GlcNAc...) asparagine; by host glycosylation is found at asparagine 386, asparagine 392, asparagine 398, asparagine 404, asparagine 443, asparagine 447, asparagine 460, asparagine 461, and asparagine 464. 2 V5 regions span residues 459–470 and 462–470; these read TNNSSNETFRPG and SSNETFRPG. The segment at 511 to 531 is fusion peptide; that stretch reads AIGLGAMFLGFLGAAGSTMGA. The immunosuppression stretch occupies residues 573 to 591; sequence KQLQARILAVERYLKDQQL. Cysteine 597 and cysteine 603 are disulfide-bonded. 5 N-linked (GlcNAc...) asparagine; by host glycosylation sites follow: asparagine 610, asparagine 615, asparagine 624, asparagine 636, and asparagine 673. Residues 632–666 are a coiled coil; that stretch reads REIDNYTGLIYRLIEESQTQQEKNEQELLELDKWA. Residues 661–682 are MPER; binding to GalCer; that stretch reads ELDKWASLWNWFNITQWLWYIK. Residues 684–704 traverse the membrane as a helical segment; it reads FIMIVGGLIGLRIVFAVLSLV. Over 705 to 855 the chain is Cytoplasmic; it reads NRVRQGYSPL…IRQGLERLLL (151 aa). The YXXL motif; contains endocytosis signal motif lies at 711-714; that stretch reads YSPL. A lipid anchor (S-palmitoyl cysteine; by host) is attached at cysteine 763. The short motif at 854 to 855 is the Di-leucine internalization motif element; the sequence is LL.

It belongs to the HIV-1 env protein family. The mature envelope protein (Env) consists of a homotrimer of non-covalently associated gp120-gp41 heterodimers. The resulting complex protrudes from the virus surface as a spike. There seems to be as few as 10 spikes on the average virion. Interacts with host CD4, CCR5 and CXCR4. Gp120 also interacts with the C-type lectins CD209/DC-SIGN and CLEC4M/DC-SIGNR (collectively referred to as DC-SIGN(R)). Gp120 and gp41 interact with GalCer. Gp120 interacts with host ITGA4/ITGB7 complex; on CD4+ T-cells, this interaction results in rapid activation of integrin ITGAL/LFA-1, which facilitates efficient cell-to-cell spreading of HIV-1. Gp120 interacts with cell-associated heparan sulfate; this interaction increases virus infectivity on permissive cells and may be involved in infection of CD4- cells. In terms of assembly, the mature envelope protein (Env) consists of a homotrimer of non-covalently associated gp120-gp41 heterodimers. The resulting complex protrudes from the virus surface as a spike. There seems to be as few as 10 spikes on the average virion. In terms of processing, highly glycosylated by host. The high number of glycan on the protein is reffered to as 'glycan shield' because it contributes to hide protein sequence from adaptive immune system. Post-translationally, palmitoylation of the transmembrane protein and of Env polyprotein (prior to its proteolytic cleavage) is essential for their association with host cell membrane lipid rafts. Palmitoylation is therefore required for envelope trafficking to classical lipid rafts, but not for viral replication. Specific enzymatic cleavages in vivo yield mature proteins. Envelope glycoproteins are synthesized as an inactive precursor that is heavily N-glycosylated and processed likely by host cell furin in the Golgi to yield the mature SU and TM proteins. The cleavage site between SU and TM requires the minimal sequence [KR]-X-[KR]-R. About 2 of the 9 disulfide bonds of gp41 are reduced by P4HB/PDI, following binding to CD4 receptor.

Its subcellular location is the virion membrane. It is found in the host cell membrane. The protein localises to the host endosome membrane. Functionally, oligomerizes in the host endoplasmic reticulum into predominantly trimers. In a second time, gp160 transits in the host Golgi, where glycosylation is completed. The precursor is then proteolytically cleaved in the trans-Golgi and thereby activated by cellular furin or furin-like proteases to produce gp120 and gp41. Its function is as follows. Attaches the virus to the host lymphoid cell by binding to the primary receptor CD4. This interaction induces a structural rearrangement creating a high affinity binding site for a chemokine coreceptor like CXCR4 and/or CCR5. Acts as a ligand for CD209/DC-SIGN and CLEC4M/DC-SIGNR, which are respectively found on dendritic cells (DCs), and on endothelial cells of liver sinusoids and lymph node sinuses. These interactions allow capture of viral particles at mucosal surfaces by these cells and subsequent transmission to permissive cells. HIV subverts the migration properties of dendritic cells to gain access to CD4+ T-cells in lymph nodes. Virus transmission to permissive T-cells occurs either in trans (without DCs infection, through viral capture and transmission), or in cis (following DCs productive infection, through the usual CD4-gp120 interaction), thereby inducing a robust infection. In trans infection, bound virions remain infectious over days and it is proposed that they are not degraded, but protected in non-lysosomal acidic organelles within the DCs close to the cell membrane thus contributing to the viral infectious potential during DCs' migration from the periphery to the lymphoid tissues. On arrival at lymphoid tissues, intact virions recycle back to DCs' cell surface allowing virus transmission to CD4+ T-cells. Acts as a class I viral fusion protein. Under the current model, the protein has at least 3 conformational states: pre-fusion native state, pre-hairpin intermediate state, and post-fusion hairpin state. During fusion of viral and target intracellular membranes, the coiled coil regions (heptad repeats) assume a trimer-of-hairpins structure, positioning the fusion peptide in close proximity to the C-terminal region of the ectodomain. The formation of this structure appears to drive apposition and subsequent fusion of viral and target cell membranes. Complete fusion occurs in host cell endosomes and is dynamin-dependent, however some lipid transfer might occur at the plasma membrane. The virus undergoes clathrin-dependent internalization long before endosomal fusion, thus minimizing the surface exposure of conserved viral epitopes during fusion and reducing the efficacy of inhibitors targeting these epitopes. Membranes fusion leads to delivery of the nucleocapsid into the cytoplasm. This is Envelope glycoprotein gp160 from Homo sapiens (Human).